An 871-amino-acid polypeptide reads, in one-letter code: Nonsense-mediated mRNA decay factor SMG8 (871 aa).

The segment at 541–596 is disordered; sequence LDDMELPESLQQSYTSSEDSSEDDDDFAIQTASSEDSLSGSDSYARPGSRRDEFES. The segment covering 573–583 has biased composition (low complexity); the sequence is SSEDSLSGSDS.

It belongs to the SMG8 family.

Involved in nonsense-mediated decay (NMD) of mRNAs containing premature stop codons. Probable component of kinase complex containing smg-1 and recruited to stalled ribosomes. The polypeptide is Nonsense-mediated mRNA decay factor SMG8 (smg-8) (Caenorhabditis briggsae).